The sequence spans 213 residues: Phosphatidylcholine transfer protein (213 aa).

Position 1 is an N-acetylmethionine (methionine 1). Positions 1-212 (MDPGAGAFSE…MVKACQNYKK (212 aa)) constitute an START domain. Residues tyrosine 72 and arginine 78 each coordinate a 1,2-diacyl-sn-glycero-3-phosphocholine. The residue at position 139 (serine 139) is a Phosphoserine. Glutamine 157 is an a 1,2-diacyl-sn-glycero-3-phosphocholine binding site. Residues 171-176 (VFMYYF) are part of the binding site for phosphatidylcholine.

As to quaternary structure, interacts with ACOT13/THEM2.

The protein resides in the cytoplasm. In terms of biological role, catalyzes the transfer of phosphatidylcholine between membranes. Binds phosphatidylcholine in a tight 1:1 stoichiometric complex. In Bos taurus (Bovine), this protein is Phosphatidylcholine transfer protein (PCTP).